A 475-amino-acid polypeptide reads, in one-letter code: UDP-N-acetylmuramate--L-alanine ligase (475 aa).

125 to 131 is a binding site for ATP; that stretch reads GTHGKTT.

This sequence belongs to the MurCDEF family.

The protein localises to the cytoplasm. It catalyses the reaction UDP-N-acetyl-alpha-D-muramate + L-alanine + ATP = UDP-N-acetyl-alpha-D-muramoyl-L-alanine + ADP + phosphate + H(+). The protein operates within cell wall biogenesis; peptidoglycan biosynthesis. In terms of biological role, cell wall formation. The chain is UDP-N-acetylmuramate--L-alanine ligase from Glaesserella parasuis serovar 5 (strain SH0165) (Haemophilus parasuis).